Here is an 854-residue protein sequence, read N- to C-terminus: Aryl hydrocarbon receptor (854 aa).

Positions 1 to 9 (MSSGANITY) are excised as a propeptide. Positions 1 to 38 (MSSGANITYASRKRRKPVQKTVKPIPAEGIKSNPSKRH) are disordered. 2 short sequence motifs (nuclear localization signal) span residues 12–15 (RKRR) and 36–41 (KRHRDR). In terms of domain architecture, bHLH spans 26-79 (PAEGIKSNPSKRHRDRLNTELDRLASLLPFPQDVINKLDKLSVLRLSVSYLRAK). The tract at residues 37 to 65 (RHRDRLNTELDRLASLLPFPQDVINKLDK) is DNA-binding. 3 required for maintaining the overall integrity of the AHR:ARNT heterodimer and its transcriptional activity regions span residues 49 to 81 (LASLLPFPQDVINKLDKLSVLRLSVSYLRAKSF), 116 to 124 (LLQALNGFV), and 264 to 266 (FAI). Positions 63–71 (LDKLSVLRL) match the Nuclear export signal motif. In terms of domain architecture, PAS 1 spans 111–175 (QEGEFLLQAL…AEFQRQLHWA (65 aa)). One can recognise a PAS 2 domain in the interval 270–340 (LQPPSILEIR…CAESHIRMIK (71 aa)). Positions 346–387 (MTVFRLLAKHSRWRWVQSNARLIYRNGRPDYIIATQRPLTDE) constitute a PAC domain. The interval 425–451 (LPIRTKSNTSRKDWAPQSTPSKDSFHP) is disordered. Polar residues predominate over residues 440–451 (PQSTPSKDSFHP).

In terms of assembly, homodimer. Heterodimer; efficient DNA binding requires dimerization with another bHLH protein. Interacts with ARNT; the heterodimer ARNT:AHR binds to core DNA sequence 5'-TGCGTG-3' within the dioxin response element (DRE) of target gene promoters and activates their transcription. Binds MYBBP1A. Interacts with coactivators including SRC-1, RIP140 and NOCA7, and with the corepressor SMRT. Interacts with NEDD8 and IVNS1ABP. Interacts with BMAL1. Interacts with HSP90AB1. Interacts with TIPARP; leading to mono-ADP-ribosylation of AHR and subsequent inhibition of AHR. In terms of processing, mono-ADP-ribosylated, leading to inhibit transcription activator activity of AHR.

It is found in the cytoplasm. The protein resides in the nucleus. In terms of biological role, ligand-activated transcription factor that enables cells to adapt to changing conditions by sensing compounds from the environment, diet, microbiome and cellular metabolism, and which plays important roles in development, immunity and cancer. Upon ligand binding, translocates into the nucleus, where it heterodimerizes with ARNT and induces transcription by binding to xenobiotic response elements (XRE). Regulates a variety of biological processes, including angiogenesis, hematopoiesis, drug and lipid metabolism, cell motility and immune modulation. Xenobiotics can act as ligands: upon xenobiotic-binding, activates the expression of multiple phase I and II xenobiotic chemical metabolizing enzyme genes (such as the CYP1A1 gene). Mediates biochemical and toxic effects of halogenated aromatic hydrocarbons. Next to xenobiotics, natural ligands derived from plants, microbiota, and endogenous metabolism are potent AHR agonists. Tryptophan (Trp) derivatives constitute an important class of endogenous AHR ligands. Acts as a negative regulator of anti-tumor immunity: indoles and kynurenic acid generated by Trp catabolism act as ligand and activate AHR, thereby promoting AHR-driven cancer cell motility and suppressing adaptive immunity. Regulates the circadian clock by inhibiting the basal and circadian expression of the core circadian component PER1. Inhibits PER1 by repressing the CLOCK-BMAL1 heterodimer mediated transcriptional activation of PER1. The heterodimer ARNT:AHR binds to core DNA sequence 5'-TGCGTG-3' within the dioxin response element (DRE) of target gene promoters and activates their transcription. The chain is Aryl hydrocarbon receptor (Ahr) from Mus spicilegus (Steppe mouse).